The sequence spans 261 residues: Glucose 1-dehydrogenase 3 (261 aa).

Residue 11–35 participates in NAD(+) binding; that stretch reads VITGGSTGLGRAMAVRFGQEEAKVV. Ser-145 is a substrate binding site. Tyr-158 serves as the catalytic Proton acceptor.

Belongs to the short-chain dehydrogenases/reductases (SDR) family. Homotetramer.

The enzyme catalyses D-glucose + NAD(+) = D-glucono-1,5-lactone + NADH + H(+). The catalysed reaction is D-glucose + NADP(+) = D-glucono-1,5-lactone + NADPH + H(+). This is Glucose 1-dehydrogenase 3 (gdhIII) from Priestia megaterium (Bacillus megaterium).